Consider the following 512-residue polypeptide: Cytochrome P450 monooxygenase poxM (512 aa).

A helical membrane pass occupies residues 15-35; the sequence is LLKGATIALSFFSLYLFGLVI. Position 449 (cysteine 449) interacts with heme.

The protein belongs to the cytochrome P450 family. It depends on heme as a cofactor.

Its subcellular location is the membrane. Its pathway is secondary metabolite biosynthesis. Its function is as follows. Cytochrome P450 monooxygenase; part of the gene cluster that mediates the biosynthesis of oxaleimides, cytotoxic compounds containing an unusual disubstituted succinimide moiety. The first step of the pathway is provided by the HR-PKS poxF that serves in a new mode of collaborative biosynthesis with the PKS-NRPS poxE, by providing the olefin containing amino acid substrate via the synthesis of an ACP-bound dec-4-enoate. The cytochrome P450 monooxygenase poxM-catalyzed oxidation at the alpha-position creates the enzyme-bound 2-hydroxydec-4-enoyl-ACP thioester, which may be prone to spontaneous hydrolysis to yield 2-hydroxydec-4-enoic acid due to increased electrophilicity of the carbonyl. 2-hydroxydec-4-enoic acid can then be further oxidized by poxM to yield the alpha-ketoacid 2-oxodec-4-enoicacid, which is reductively aminated by the aminotransferase poxL to yield (S,E)-2-aminodec-4-enoic acid. The Hybrid PKS-NRPS synthetase poxE then performs condensation between the octaketide product of its PKS modules and the amino group of (S,E)-2-aminodec-4-enoic acid which is activated and incorporated by the adenylation domain. The resulting aminoacyl product can be cyclized by the Diels-Alderase PoxQ and reductively released by the reductive (R) domain of poxE to yield an aldehyde intermediate. The released aldehyde is then substrate for a Knoevenagel condensation by the hydrolyase poxO followed by an oxidation at the 5-position of the pyrrolidone ring. The presence of the olefin from the amino acid building block allows for migration of the substituted allyl group to occur. This allylic transposition reaction takes place in a conjugate addition, semipinacol-like fashion to yield a succinimide intermediate. Iterative two-electron oxidations of the C7 methyl of the succinimide intermediate to the carboxylic acid can be catalyzed by one of two remaining cytochrome P450 monooxygenasess poxC or poxD to yield oxaleimide A. Subsequent oxidation yields the maleimide scaffold oxaleimide I. Both oxaleimide A and oxaleimide I can undergo oxidative modifications in the decalin ring to yield the series of products oxaleimides B to H. The polypeptide is Cytochrome P450 monooxygenase poxM (Penicillium oxalicum (strain 114-2 / CGMCC 5302) (Penicillium decumbens)).